A 174-amino-acid polypeptide reads, in one-letter code: MSTVGFHTCASCVDGPKSIKCVSKYRISVYKTLGLDVVKCRLPADCGVNCGMPAAFVLEQGHPKLTMDGYCGEKHRGYVLSGAWRHAQLRSLNAELDTLEAREESLRAQIKALSAGDHCPAVLAYVPKKLTKLKAEVHDVTGKKQVCITGLVDVMDSALVRLAPDSPPKKISSL.

Positions 86-116 (HAQLRSLNAELDTLEAREESLRAQIKALSAG) form a coiled coil.

This sequence belongs to the virgaviridae suppressor of RNA silencing family.

Functionally, suppressor of RNA-mediated gene silencing, also known as post-transcriptional gene silencing (PTGS), a mechanism of plant viral defense that performs sequence-specific inhibition of viral mRNAs expression. This chain is Suppressor of RNA silencing, found in Soil-borne wheat mosaic virus (strain United States/Nebraska/1981) (SBWMV).